The chain runs to 365 residues: Phospho-N-acetylmuramoyl-pentapeptide-transferase (365 aa).

10 helical membrane-spanning segments follow: residues Val29–Trp49, Gly73–Trp93, Ser97–Val117, Ile133–Ile153, Ile171–Ser191, Gly202–Val222, Leu242–Tyr262, Ile266–Leu286, Tyr291–Val311, and Ile341–Ile361.

The protein belongs to the glycosyltransferase 4 family. MraY subfamily. Requires Mg(2+) as cofactor.

The protein resides in the cell inner membrane. The catalysed reaction is UDP-N-acetyl-alpha-D-muramoyl-L-alanyl-gamma-D-glutamyl-meso-2,6-diaminopimeloyl-D-alanyl-D-alanine + di-trans,octa-cis-undecaprenyl phosphate = di-trans,octa-cis-undecaprenyl diphospho-N-acetyl-alpha-D-muramoyl-L-alanyl-D-glutamyl-meso-2,6-diaminopimeloyl-D-alanyl-D-alanine + UMP. Its pathway is cell wall biogenesis; peptidoglycan biosynthesis. Catalyzes the initial step of the lipid cycle reactions in the biosynthesis of the cell wall peptidoglycan: transfers peptidoglycan precursor phospho-MurNAc-pentapeptide from UDP-MurNAc-pentapeptide onto the lipid carrier undecaprenyl phosphate, yielding undecaprenyl-pyrophosphoryl-MurNAc-pentapeptide, known as lipid I. In Blochmanniella floridana, this protein is Phospho-N-acetylmuramoyl-pentapeptide-transferase.